Reading from the N-terminus, the 299-residue chain is NAD kinase (299 aa).

D71 acts as the Proton acceptor in catalysis. Residues 71–72 (DG), 145–146 (ND), R173, D175, 186–191 (TAYALS), A210, and Q248 contribute to the NAD(+) site.

This sequence belongs to the NAD kinase family. It depends on a divalent metal cation as a cofactor.

The protein resides in the cytoplasm. The enzyme catalyses NAD(+) + ATP = ADP + NADP(+) + H(+). In terms of biological role, involved in the regulation of the intracellular balance of NAD and NADP, and is a key enzyme in the biosynthesis of NADP. Catalyzes specifically the phosphorylation on 2'-hydroxyl of the adenosine moiety of NAD to yield NADP. This Bordetella avium (strain 197N) protein is NAD kinase.